The sequence spans 1154 residues: Chromosome partition protein Smc (1154 aa).

Position 32–39 (32–39) interacts with ATP; it reads PNGCGKSN. 3 coiled-coil regions span residues 170 to 215, 282 to 505, and 627 to 993; these read VAGL…ARQA, LREA…LNGE, and AARR…EARE.

Belongs to the SMC family. In terms of assembly, homodimer.

It is found in the cytoplasm. Required for chromosome condensation and partitioning. This chain is Chromosome partition protein Smc, found in Rhodopseudomonas palustris (strain ATCC BAA-98 / CGA009).